An 88-amino-acid polypeptide reads, in one-letter code: MGTARFLSAVLLLSVLLMVTFPALLSAEYHDGRVDICSLPSDSGDRLRFFEMWYFDGTTCTKFVYGGYGGNDNRFPTEKACMKRCAKA.

The N-terminal stretch at 1-27 (MGTARFLSAVLLLSVLLMVTFPALLSA) is a signal peptide. Residues 28–33 (EYHDGR) constitute a propeptide that is removed on maturation. Positions 37–85 (CSLPSDSGDRLRFFEMWYFDGTTCTKFVYGGYGGNDNRFPTEKACMKRC) constitute a BPTI/Kunitz inhibitor domain. Disulfide bonds link Cys37/Cys85 and Cys60/Cys81.

It belongs to the venom Kunitz-type family. 03 (sub-Kunitz) subfamily. Expressed by the venom gland.

Its subcellular location is the secreted. Functionally, serine protease inhibitor that inhibits trypsin (Ki=9.61 nM), kallikrein (Ki=24.8 nM), and chymotrypsin. The polypeptide is Kunitz-type U15-theraphotoxin-Hs1e (Cyriopagopus schmidti (Chinese bird spider)).